Here is a 245-residue protein sequence, read N- to C-terminus: Peroxisome biogenesis protein 19-2 (245 aa).

The interval 17-106 (ALDDFKDLNL…LSSKQQPTGS (90 aa)) is disordered. 2 stretches are compositionally biased toward basic and acidic residues: residues 33-44 (VKKEEGDKKETE) and 71-92 (AKED…ETVK). Residues 96–105 (SLSSKQQPTG) are compositionally biased toward polar residues. The residue at position 242 (Cys-242) is a Cysteine methyl ester. Residue Cys-242 is the site of S-farnesyl cysteine attachment. Residues 243 to 245 (CVM) constitute a propeptide, removed in mature form.

This sequence belongs to the peroxin-19 family. As to quaternary structure, dimer. Interacts with PEX10 (via C-terminus). Post-translationally, may be farnesylated. As to expression, expressed in roots, leaves, flowers, siliques and stems. Highest expression in roots and leaves.

The protein resides in the cytoplasm. It is found in the peroxisome membrane. In terms of biological role, contributes to morphology determination of peroxisomes, but not to import of peroxisomal matrix proteins. Required for proper post-translational import and stabilization of peroxisomal membrane proteins (PMPs). Acts as a cytosolic import receptor for PMPs and delivers them to the docking factor PEX3 at the peroxisomal membrane for subsequent insertion into the membrane. Acts as a chaperone in stabilizing or maintaining PMPs in the lipid bilayer. The protein is Peroxisome biogenesis protein 19-2 (PEX19-2) of Arabidopsis thaliana (Mouse-ear cress).